A 1296-amino-acid polypeptide reads, in one-letter code: Clustered mitochondria protein homolog (1296 aa).

The segment at 1-31 is disordered; the sequence is MTLMNGDGAHEHQAEAEPKQNGHEMGDQTEE. A compositionally biased stretch (basic and acidic residues) spans 8–26; it reads GAHEHQAEAEPKQNGHEMG. In terms of domain architecture, Clu spans 333–575; it reads RAEDAYTSRL…RTFPPDLNFL (243 aa). Positions 662–689 form a coiled coil; it reads LDGEAQLKQLEETMAAHKETVDTRSKEV. 4 TPR repeats span residues 970 to 1003, 1012 to 1045, 1096 to 1129, and 1138 to 1171; these read AFHFFQSGQAKVQQGYLKEGCELINEALNLFNNV, CACLRLLARLNYIMGDYSEALSNQQKAVLMSERI, ALLDSNIGLVLHGVMEYDLSLRFLENALTINSKY, and ALSHHLVARVYETKGEFRSALQHEKDGYTIYKNQ. Residues 1242-1274 adopt a coiled-coil conformation; that stretch reads QKDLEHLKAEVQRRQQLQEAIKGAENHEAKTKE. A disordered region spans residues 1261 to 1296; it reads AIKGAENHEAKTKEPEMSETSDSNINAASVAPESSD. The segment covering 1263-1276 has biased composition (basic and acidic residues); the sequence is KGAENHEAKTKEPE. The segment covering 1278–1296 has biased composition (polar residues); it reads SETSDSNINAASVAPESSD.

This sequence belongs to the CLU family.

The protein localises to the cytoplasm. The protein resides in the cytoplasmic granule. Its function is as follows. mRNA-binding protein involved in proper cytoplasmic distribution of mitochondria. Specifically binds mRNAs of nuclear-encoded mitochondrial proteins in the cytoplasm and regulates transport or translation of these transcripts close to mitochondria, playing a role in mitochondrial biogenesis. The protein is Clustered mitochondria protein homolog of Xenopus tropicalis (Western clawed frog).